The chain runs to 314 residues: Small ribosomal subunit protein uS2c (314 aa).

This sequence belongs to the universal ribosomal protein uS2 family.

The protein resides in the plastid. The protein localises to the chloroplast. The polypeptide is Small ribosomal subunit protein uS2c (rps2) (Stigeoclonium helveticum (Green alga)).